Consider the following 231-residue polypeptide: Flagellar L-ring protein (231 aa).

The signal sequence occupies residues 1 to 18 (MKRFVSVVALSGVVSLAG). A lipid anchor (N-palmitoyl cysteine) is attached at Cys-19. Residue Cys-19 is the site of S-diacylglycerol cysteine attachment.

It belongs to the FlgH family. The basal body constitutes a major portion of the flagellar organelle and consists of four rings (L,P,S, and M) mounted on a central rod.

The protein localises to the cell outer membrane. It localises to the bacterial flagellum basal body. In terms of biological role, assembles around the rod to form the L-ring and probably protects the motor/basal body from shearing forces during rotation. In Pseudomonas fluorescens (strain Pf0-1), this protein is Flagellar L-ring protein.